A 151-amino-acid chain; its full sequence is MVNRHLASQGLAVKTESSVWAHSMRDCWTSVFGAGKNGELLWISIPVACHCEQCPVLLLPAALADVLSTSSRKFSNASSALLSPRADMVSAVIPGAPLMMLKKKELKDETKNKTACKHLCSCCPQSPLPGYCQLPGPTFPKDQPGHSEGQR.

Its subcellular location is the cytoplasm. The protein resides in the cytosol. This chain is Protein InSETG-4 (InSet4-G), found in Homo sapiens (Human).